The sequence spans 90 residues: Major envelope protein (90 aa).

Residues 53–70 form a helical membrane-spanning segment; sequence AVSVVSWAVAAGLIGELI.

It is found in the virion membrane. Essential for membrane formation. The protein is Major envelope protein (P9) of Pseudomonas savastanoi pv. phaseolicola (Pseudomonas syringae pv. phaseolicola).